Reading from the N-terminus, the 747-residue chain is Flowering time control protein FCA (747 aa).

Residues 80 to 101 (YSVRPTTPPVQQPLSGQKRGYP) are disordered. 2 RRM domains span residues 120 to 201 (VKLF…YADG) and 211 to 291 (FKLF…FAEP). Residues 291 to 301 (PKRPKPGESRE) are compositionally biased toward basic and acidic residues. The segment at 291–503 (PKRPKPGESR…QQPLQKMQHP (213 aa)) is disordered. Composition is skewed to polar residues over residues 320 to 353 (RPTSNFGDSSGDVSHTNPWRPATSRNVGPPSNTG) and 395 to 406 (SSSATLQQQNRA). Residues 448–460 (SSQLPTSQLPPQQ) show a composition bias toward low complexity. Residues 461–498 (NISRATAPQTPLNINLRPTTVSSATVQFPPRSQQQPLQ) are compositionally biased toward polar residues. The 34-residue stretch at 591-624 (GSVKCTWTEHTSPDGFKYYYNGLTGESKWEKPEE) folds into the WW domain. Positions 630-641 (REQQKQQQHQEK) are enriched in basic and acidic residues. 2 disordered regions span residues 630–707 (REQQ…SGIG) and 722–747 (AASMNDISRTQQSRQSPQELMWKNKA). Positions 642–673 (PTIQQSQTQLQPLQQQPQQVQQQYQGQQLQQP) are enriched in low complexity. 2 stretches are compositionally biased toward polar residues: residues 674 to 707 (FYSSLYPTPGASHNTQYPSLPVGQNSQFPMSGIG) and 726 to 739 (NDISRTQQSRQSPQ).

Interacts (via C-terminus) with SWI3B and (via WW domain) with FY (via PPLPP motifs). As to expression, constitutively expressed, but the negative feedback maintains the active isoform a low level throughout much of the plant, except in meristematic cells at a specific time in development.

The protein localises to the nucleus. In terms of biological role, plays a major role in the promotion of the transition of the vegetative meristem to reproductive development. Plays a role in the regulation of flowering time in the autonomous flowering pathway by decreasing FLOWERING LOCUS C mRNA levels. Required for RNA-mediated chromatin silencing of a range of loci in the genome. Cotranscriptionally recognizes aberrant RNA and marks it for silencing. Controls alternative cleavage and polyadenylation on pre-mRNAs and antisense RNAs. Acts redundantly with FPA to prevent the expression of distally polyadenylated antisense RNAs at the FLC locus. The sequence is that of Flowering time control protein FCA (FCA) from Arabidopsis thaliana (Mouse-ear cress).